Reading from the N-terminus, the 180-residue chain is Cytidylate kinase (180 aa).

Position 7–15 (7–15 (GLPGSGTST)) interacts with ATP.

The protein belongs to the cytidylate kinase family. Type 2 subfamily.

It localises to the cytoplasm. The enzyme catalyses CMP + ATP = CDP + ADP. It catalyses the reaction dCMP + ATP = dCDP + ADP. The protein is Cytidylate kinase (cmk) of Methanosarcina mazei (strain ATCC BAA-159 / DSM 3647 / Goe1 / Go1 / JCM 11833 / OCM 88) (Methanosarcina frisia).